The sequence spans 675 residues: MPATHHSSATSAERPTVVGRIPVLDVRPVVQRGRRPAKAVTGESFEVSATVFREGHDAVGANVVLRDPRGRPGPWTPMRELAPGTDRWGATVTAGETGTWSYTVEAWGDPVTTWRHHARIKIPAGLDTDLVLEEGARLYERAAADVPGREDRRELLAAVDALRDESRPAASRLAAALTPQVDAVLARHPLRDLVTSSDPLPLLVERERALYGAWYEFFPRSEGTPHTPHGTFRTAARRLPAIAAMGFDVVYLPPIHPIGTTHRKGRNNTLSATGDDVGVPWAIGSPEGGHDSIHPALGTLDDFDHFVTEAGKLGLEIALDFALQCSPDHPWVHKHPEWFHHRPDGTIAHAENPPKKYQDIYPIAFDADPDGLATETVRILRHWMDHGVRIFRVDNPHTKPVAFWERVIADINGTDPDVIFLAEAFTRPAMMATLAQIGFQQSYTYFTWRNTKQELTEYLTELSGEAASYMRPNFFANTPDILHAYLQHGGRPAFEVRAVLAATLSPTWGIYSGYELCENTPLREGSEEYLDSEKYQLKPRDWTRAAREGTTIAPLVTRLNTIRRENPALRQLRDLHFHPTDKEEVIAYSKRQGSNTVLVVVNLDPRHTQEATVSLDMPQLGLDWHESVPVRDELTGETYHWGRANYVRLEPGRTPAHVCTVLRPSHPQIGGSHTT.

Residues Lys-264, Gln-324, and Asp-359 each coordinate alpha-maltose 1-phosphate. Asp-394 (nucleophile) is an active-site residue. Alpha-maltose 1-phosphate is bound at residue Asn-395. Residue Glu-423 is the Proton donor of the active site. An alpha-maltose 1-phosphate-binding site is contributed by Lys-534–Tyr-535.

This sequence belongs to the glycosyl hydrolase 13 family. GlgE subfamily. As to quaternary structure, homodimer.

The enzyme catalyses alpha-maltose 1-phosphate + [(1-&gt;4)-alpha-D-glucosyl](n) = [(1-&gt;4)-alpha-D-glucosyl](n+2) + phosphate. With respect to regulation, is competitively inhibited by alpha-, beta- and gamma-cyclodextrins (cyclic maltooligosaccharides), unlike GlgE from M.tuberculosis. Functionally, maltosyltransferase that uses maltose 1-phosphate (M1P) as the sugar donor to elongate linear or branched alpha-(1-&gt;4)-glucans. Maltooligosaccharides with a degree of polymerization (DP) superior or equal to 4 are efficient acceptors, with DP6 being optimal in the GlgE-catalyzed polymerization with M1P. Is specific for the alpha-anomer of M1P as substrate, since the beta-anomer of M1P gives no activity. Alpha-D-glucose 1-phosphate cannot serve as a donor substrate, but alpha-maltosyl fluoride is an efficient donor in vitro. Exhibits an alpha-retaining catalytic mechanism, with evidence that maltooligosaccharide acceptors are extended at their non-reducing ends. Is also able to catalyze the reverse reaction in vitro, releasing M1P from glycogen or maltoheptaose in the presence of inorganic phosphate. Also catalyzes disproportionation reactions through maltosyl transfer between maltooligosaccharides. Is probably involved in a branched alpha-glucan biosynthetic pathway from trehalose, together with TreS, Mak and GlgB. In Streptomyces coelicolor (strain ATCC BAA-471 / A3(2) / M145), this protein is Alpha-1,4-glucan:maltose-1-phosphate maltosyltransferase 1 (glgE1).